The primary structure comprises 373 residues: Lipoyl synthase (373 aa).

Positions 14–36 are disordered; that stretch reads VSNDHPSSSPLQPGVKQSGEDKI. Residues Cys-81, Cys-86, Cys-92, Cys-107, Cys-111, Cys-114, and Ser-323 each coordinate [4Fe-4S] cluster. The Radical SAM core domain occupies 93–312; the sequence is FSHGTATFMI…EEYGMALGFS (220 aa). Residues 346–373 are disordered; the sequence is PAVSSTEHRERNTIASKSASKTESIHHR. The span at 358–367 shows a compositional bias: polar residues; that stretch reads TIASKSASKT.

It belongs to the radical SAM superfamily. Lipoyl synthase family. It depends on [4Fe-4S] cluster as a cofactor.

The protein localises to the cytoplasm. It catalyses the reaction [[Fe-S] cluster scaffold protein carrying a second [4Fe-4S](2+) cluster] + N(6)-octanoyl-L-lysyl-[protein] + 2 oxidized [2Fe-2S]-[ferredoxin] + 2 S-adenosyl-L-methionine + 4 H(+) = [[Fe-S] cluster scaffold protein] + N(6)-[(R)-dihydrolipoyl]-L-lysyl-[protein] + 4 Fe(3+) + 2 hydrogen sulfide + 2 5'-deoxyadenosine + 2 L-methionine + 2 reduced [2Fe-2S]-[ferredoxin]. Its pathway is protein modification; protein lipoylation via endogenous pathway; protein N(6)-(lipoyl)lysine from octanoyl-[acyl-carrier-protein]: step 2/2. Its function is as follows. Catalyzes the radical-mediated insertion of two sulfur atoms into the C-6 and C-8 positions of the octanoyl moiety bound to the lipoyl domains of lipoate-dependent enzymes, thereby converting the octanoylated domains into lipoylated derivatives. The protein is Lipoyl synthase of Xylella fastidiosa (strain M23).